A 331-amino-acid polypeptide reads, in one-letter code: Aspartate carbamoyltransferase catalytic subunit (331 aa).

The carbamoyl phosphate site is built by Arg-55 and Thr-56. Position 84 (Lys-84) interacts with L-aspartate. Arg-105, His-133, and Gln-136 together coordinate carbamoyl phosphate. Arg-166 and Arg-229 together coordinate L-aspartate. Carbamoyl phosphate-binding residues include Leu-268 and Pro-269.

This sequence belongs to the aspartate/ornithine carbamoyltransferase superfamily. ATCase family. Heterododecamer (2C3:3R2) of six catalytic PyrB chains organized as two trimers (C3), and six regulatory PyrI chains organized as three dimers (R2).

The enzyme catalyses carbamoyl phosphate + L-aspartate = N-carbamoyl-L-aspartate + phosphate + H(+). It participates in pyrimidine metabolism; UMP biosynthesis via de novo pathway; (S)-dihydroorotate from bicarbonate: step 2/3. Its function is as follows. Catalyzes the condensation of carbamoyl phosphate and aspartate to form carbamoyl aspartate and inorganic phosphate, the committed step in the de novo pyrimidine nucleotide biosynthesis pathway. The protein is Aspartate carbamoyltransferase catalytic subunit of Alkaliphilus oremlandii (strain OhILAs) (Clostridium oremlandii (strain OhILAs)).